The sequence spans 186 residues: Ribosome-recycling factor (186 aa).

The protein belongs to the RRF family.

The protein resides in the cytoplasm. Functionally, responsible for the release of ribosomes from messenger RNA at the termination of protein biosynthesis. May increase the efficiency of translation by recycling ribosomes from one round of translation to another. In Limosilactobacillus reuteri (Lactobacillus reuteri), this protein is Ribosome-recycling factor.